Consider the following 388-residue polypeptide: L-lactate dehydrogenase (388 aa).

The FMN hydroxy acid dehydrogenase domain maps to 1–380 (MIISAASDYR…SADALSRVTR (380 aa)). Y24 is a substrate binding site. FMN is bound by residues S106 and Q127. Position 129 (Y129) interacts with substrate. Residue T155 participates in FMN binding. A substrate-binding site is contributed by R164. K251 contacts FMN. The active-site Proton acceptor is the H275. R278 lines the substrate pocket. An FMN-binding site is contributed by 306–330 (DSGIRSGLDVVRMLALGADAVLLGR).

Belongs to the FMN-dependent alpha-hydroxy acid dehydrogenase family. It depends on FMN as a cofactor.

The protein localises to the cell inner membrane. The enzyme catalyses (S)-lactate + A = pyruvate + AH2. Functionally, catalyzes the conversion of L-lactate to pyruvate. Is coupled to the respiratory chain. The chain is L-lactate dehydrogenase from Xanthomonas euvesicatoria pv. vesicatoria (strain 85-10) (Xanthomonas campestris pv. vesicatoria).